Here is a 70-residue protein sequence, read N- to C-terminus: Mu-agatoxin-Ao1a (70 aa).

The N-terminal stretch at 1 to 20 (MKAIIFFCFLSVMVFIVAEA) is a signal peptide. A propeptide spanning residues 21–33 (SSLEALKIFEGER) is cleaved from the precursor. Cystine bridges form between Cys35–Cys50, Cys42–Cys55, Cys49–Cys65, and Cys57–Cys63. Asn69 bears the Asparagine amide mark.

Belongs to the neurotoxin 07 (Beta/delta-agtx) family. 04 (aga-5) subfamily. Expressed by the venom gland.

The protein localises to the secreted. Its function is as follows. Insecticidal neurotoxin that modulates the insect Nav channel (DmNaV1/tipE (para/tipE)) in a unique manner, with both the activation and inactivation processes being affected. The voltage dependence of activation is shifted toward more hyperpolarized potentials (analogous to site 4 toxins) and a non-inactivating persistent sodium current is induced (site 3-like action). Interestingly, both effects take place in a voltage-dependent manner, producing a bell-shaped curve between -80 and 0 mV. This is Mu-agatoxin-Ao1a from Agelena orientalis (Funnel-web spider).